A 382-amino-acid polypeptide reads, in one-letter code: Probable purine permease 4 (382 aa).

A run of 10 helical transmembrane segments spans residues 25 to 45, 62 to 82, 98 to 118, 121 to 141, 150 to 170, 185 to 205, 224 to 244, 260 to 280, 291 to 311, and 315 to 335; these read LTLL…SSLL, WVQS…HYVL, LIFS…FSWG, YLPV…TLIL, ITFS…LLAL, YFIG…YLPV, LVME…EGGF, TFYW…SFAA, ITGG…GVVA, and VFGG…SSYT. An EamA domain is found at 66 to 170; the sequence is AGFPLLLILI…LTLSSVLLAL (105 aa). The disordered stretch occupies residues 345-364; it reads EEKEKGEYSGVKTTEDSGEM.

This sequence belongs to the purine permeases (TC 2.A.7.14) family.

Its subcellular location is the membrane. The protein is Probable purine permease 4 (PUP4) of Arabidopsis thaliana (Mouse-ear cress).